A 109-amino-acid polypeptide reads, in one-letter code: Anther-specific protein MZm3-3 (109 aa).

The signal sequence occupies residues 1–41; it reads MTATTTTAAGGGKVQPRGLPVALSLLLLLVLAAGLGGGAEA. 4 disulfides stabilise this stretch: Cys45–Cys86, Cys55–Cys75, Cys76–Cys101, and Cys88–Cys108.

Belongs to the A9/FIL1 family. As to expression, tapetum of anthers.

It is found in the secreted. This Zea mays (Maize) protein is Anther-specific protein MZm3-3.